Consider the following 113-residue polypeptide: Ribonuclease P protein component (113 aa).

Positions 1 to 10 (MLPTRHRMRT) are enriched in basic residues. The segment at 1–23 (MLPTRHRMRTSAHFSTTVRSGAR) is disordered.

It belongs to the RnpA family. As to quaternary structure, consists of a catalytic RNA component (M1 or rnpB) and a protein subunit.

It catalyses the reaction Endonucleolytic cleavage of RNA, removing 5'-extranucleotides from tRNA precursor.. In terms of biological role, RNaseP catalyzes the removal of the 5'-leader sequence from pre-tRNA to produce the mature 5'-terminus. It can also cleave other RNA substrates such as 4.5S RNA. The protein component plays an auxiliary but essential role in vivo by binding to the 5'-leader sequence and broadening the substrate specificity of the ribozyme. In Kocuria rhizophila (strain ATCC 9341 / DSM 348 / NBRC 103217 / DC2201), this protein is Ribonuclease P protein component.